The chain runs to 387 residues: GTP-binding protein 10 (387 aa).

The 136-residue stretch at Gly-13–Ile-148 folds into the Obg domain. The region spanning Ala-149 to Asp-344 is the OBG-type G domain. Residues Gly-155 to Ser-162, Asp-202 to Leu-206, and Asn-278 to Asp-281 each bind GTP.

Belongs to the TRAFAC class OBG-HflX-like GTPase superfamily. OBG GTPase family.

It is found in the nucleus. It localises to the nucleolus. The protein localises to the chromosome. Functionally, may be involved in the ribosome maturation process. Complements an ObgE(CgtA) function in E.coli ribosome maturation. Plays a role of GTPase in vitro. When missing, disorganization of the nucleolar architecture is observed. This chain is GTP-binding protein 10 (GTPBP10), found in Homo sapiens (Human).